The chain runs to 177 residues: Protein VERNALIZATION 3 (177 aa).

This sequence belongs to the phosphatidylethanolamine-binding protein family. In terms of tissue distribution, expressed in leaves but not in shoot apex.

Its function is as follows. Involved in the regulation of vernalization and of flowering time; this process in essential for flowering in cv. Bd29-1 but seems do not occur in cv. Bd21. The polypeptide is Protein VERNALIZATION 3 (Brachypodium distachyon (Purple false brome)).